A 20-amino-acid chain; its full sequence is ANNPGARKAIRKIEARTEVN.

Residues 1–20 (ANNPGARKAIRKIEARTEVN) are disordered. Residues 11-20 (RKIEARTEVN) show a composition bias toward basic and acidic residues.

The protein belongs to the bacterial ribosomal protein bS20 family.

Functionally, binds directly to 16S ribosomal RNA. The protein is Small ribosomal subunit protein bS20 (rpsT) of Brevundimonas vesicularis (Pseudomonas vesicularis).